A 400-amino-acid chain; its full sequence is CinA-like protein (400 aa).

Belongs to the CinA family.

The chain is CinA-like protein from Shigella flexneri.